We begin with the raw amino-acid sequence, 365 residues long: Putative ankyrin repeat protein R903 (365 aa).

ANK repeat units follow at residues 38 to 67, 68 to 97, 99 to 127, 129 to 158, 184 to 213, 214 to 243, 245 to 273, 275 to 298, 299 to 328, and 330 to 361; these read NINSFFMIFVEQGNLSWVKILHSQGYDIRF, QNNEALKIACKYGYLEIVKYLYDHGCDIFI, NNFCLKIASERGHLEIVKYLYQNGYKFSN, SKPILDIAAANGHFEIIKYVRLLNPNNINK, KFKDNIYRATEYGNIEIIKKTWNKFCGNIT, VSNNLFKIAVVYGHLNIIKYMFKKGHRFPR, SNELIQIACGKGYLDIVKYLHKKGFSIVD, LLNIAGRFGHHDVVEYLYKRLKNV, NLQKVITITIENDYLEIVKFFVTKENNPDE, and RTYLILAHKHGHNRIIRYFDSLLIMTQQKLQS.

This chain is Putative ankyrin repeat protein R903, found in Acanthamoeba polyphaga mimivirus (APMV).